We begin with the raw amino-acid sequence, 356 residues long: Glutamine synthetase (356 aa).

Residues 19-99 enclose the GS beta-grasp domain; it reads VIAEYIWIGG…VICDTYTPAG (81 aa). Residues 106–356 enclose the GS catalytic domain; it reads KRHGAAKIFS…IAETTLLWKP (251 aa).

Belongs to the glutamine synthetase family. In terms of assembly, homooctamer. As to expression, found at highest levels in root nodules.

It is found in the cytoplasm. It catalyses the reaction L-glutamate + NH4(+) + ATP = L-glutamine + ADP + phosphate + H(+). The protein is Glutamine synthetase (GLN1) of Alnus glutinosa (European alder).